Consider the following 75-residue polypeptide: UPF0291 protein lin1342 (75 aa).

Positions isoleucine 55 to lysine 75 are disordered. The span at histidine 65 to lysine 75 shows a compositional bias: basic residues.

It belongs to the UPF0291 family.

It is found in the cytoplasm. The sequence is that of UPF0291 protein lin1342 from Listeria innocua serovar 6a (strain ATCC BAA-680 / CLIP 11262).